The primary structure comprises 370 residues: Chaperone protein DnaJ (370 aa).

The region spanning 6-70 (DYYEVLGVQR…EKRSMYDRFG (65 aa)) is the J domain. A CR-type zinc finger spans residues 128–208 (GVEKTIEYRR…CRGEGRIRQT (81 aa)). Residues C141, C144, C158, C161, C182, C185, C196, and C199 each contribute to the Zn(2+) site. CXXCXGXG motif repeat units follow at residues 141 to 148 (CPACRGSG), 158 to 165 (CPKCGGLG), 182 to 189 (CDMCRGEG), and 196 to 203 (CRECRGEG).

It belongs to the DnaJ family. As to quaternary structure, homodimer. Zn(2+) serves as cofactor.

It localises to the cytoplasm. In terms of biological role, participates actively in the response to hyperosmotic and heat shock by preventing the aggregation of stress-denatured proteins and by disaggregating proteins, also in an autonomous, DnaK-independent fashion. Unfolded proteins bind initially to DnaJ; upon interaction with the DnaJ-bound protein, DnaK hydrolyzes its bound ATP, resulting in the formation of a stable complex. GrpE releases ADP from DnaK; ATP binding to DnaK triggers the release of the substrate protein, thus completing the reaction cycle. Several rounds of ATP-dependent interactions between DnaJ, DnaK and GrpE are required for fully efficient folding. Also involved, together with DnaK and GrpE, in the DNA replication of plasmids through activation of initiation proteins. This Roseiflexus castenholzii (strain DSM 13941 / HLO8) protein is Chaperone protein DnaJ.